Consider the following 570-residue polypeptide: Guanine nucleotide-binding protein alpha-3 subunit (570 aa).

Residues 10–113 (RETLRAYLSK…WIEAIKHAIE (104 aa)) enclose the PH domain. A G-alpha domain is found at 144 to 570 (PVLKLLLLGT…IISKTLEFYC (427 aa)). Positions 147–160 (KLLLLGTGESGKST) are G1 motif. Position 152–159 (152–159 (GTGESGKS)) interacts with GTP. Residue S159 coordinates Mg(2+). Composition is skewed to low complexity over residues 254–272 (NNNSNSSSLKNNSGGSSSS) and 290–316 (NSNSASPNGPSSSTTTSTINTHNRSNS). Residues 254–321 (NNNSNSSSLK…NRSNSDGSSN (68 aa)) form a disordered region. A G2 motif region spans residues 386-394 (DILKSRATT). GTP is bound by residues 388–394 (LKSRATT), 414–418 (DVAGQ), 483–486 (NKID), and A544. T394 provides a ligand contact to Mg(2+). A G3 motif region spans residues 410-419 (FRIVDVAGQR). A G4 motif region spans residues 479 to 486 (ILFLNKID). The interval 542 to 547 (TCATDT) is G5 motif.

The protein belongs to the G-alpha family. G proteins are composed of 3 units; alpha, beta and gamma. The alpha chain contains the guanine nucleotide binding site.

Functionally, guanine nucleotide-binding proteins (G proteins) are involved as modulators or transducers in various transmembrane signaling systems. G alpha-3 plays a role in development. G alpha-3 mutants fail to aggregate. In Dictyostelium discoideum (Social amoeba), this protein is Guanine nucleotide-binding protein alpha-3 subunit (gpaC).